We begin with the raw amino-acid sequence, 468 residues long: 6-phospho-beta-galactosidase (468 aa).

Residues Gln-19, His-116, Asn-159, Glu-160, and Asn-297 each contribute to the D-galactose 6-phosphate site. The Proton donor role is filled by Glu-160. Glu-375 acts as the Nucleophile in catalysis. D-galactose 6-phosphate is bound by residues Ser-428, Trp-429, Lys-435, and Tyr-437.

The protein belongs to the glycosyl hydrolase 1 family.

The enzyme catalyses a 6-phospho-beta-D-galactoside + H2O = D-galactose 6-phosphate + an alcohol. The protein operates within carbohydrate metabolism; lactose degradation; D-galactose 6-phosphate and beta-D-glucose from lactose 6-phosphate: step 1/1. This is 6-phospho-beta-galactosidase from Streptococcus pyogenes serotype M18 (strain MGAS8232).